The sequence spans 170 residues: MKGKYFIPCLLLPTMMLASGGGGETDIVERTINFVIFIAIFYYLAADKIKAIFVARQESIAAELEKVQEKLKESKKAKEQAQKRFEESKRMAEDVILTAKKEVVLLTQKVEDSTKGDIENLIRQYNDSMEFEKRKAERAIIDEILAELFESDATKLDKSAYSEILLKKVA.

The chain crosses the membrane as a helical span at residues 5–25 (YFIPCLLLPTMMLASGGGGET).

This sequence belongs to the ATPase B chain family. F-type ATPases have 2 components, F(1) - the catalytic core - and F(0) - the membrane proton channel. F(1) has five subunits: alpha(3), beta(3), gamma(1), delta(1), epsilon(1). F(0) has three main subunits: a(1), b(2) and c(10-14). The alpha and beta chains form an alternating ring which encloses part of the gamma chain. F(1) is attached to F(0) by a central stalk formed by the gamma and epsilon chains, while a peripheral stalk is formed by the delta and b chains.

The protein resides in the cell inner membrane. F(1)F(0) ATP synthase produces ATP from ADP in the presence of a proton or sodium gradient. F-type ATPases consist of two structural domains, F(1) containing the extramembraneous catalytic core and F(0) containing the membrane proton channel, linked together by a central stalk and a peripheral stalk. During catalysis, ATP synthesis in the catalytic domain of F(1) is coupled via a rotary mechanism of the central stalk subunits to proton translocation. Functionally, component of the F(0) channel, it forms part of the peripheral stalk, linking F(1) to F(0). The polypeptide is ATP synthase subunit b (Wolinella succinogenes (strain ATCC 29543 / DSM 1740 / CCUG 13145 / JCM 31913 / LMG 7466 / NCTC 11488 / FDC 602W) (Vibrio succinogenes)).